The sequence spans 336 residues: Retinol dehydrogenase 14 (336 aa).

Thr-5 carries the phosphothreonine modification. 50–56 (GANSGLG) serves as a coordination point for NADP(+). Ser-192 is a substrate binding site. The active-site Proton acceptor is the Tyr-217.

Belongs to the short-chain dehydrogenases/reductases (SDR) family. Widely expressed.

The catalysed reaction is all-trans-retinol + NADP(+) = all-trans-retinal + NADPH + H(+). It carries out the reaction 9-cis-retinol + NADP(+) = 9-cis-retinal + NADPH + H(+). The enzyme catalyses 11-cis-retinol + NADP(+) = 11-cis-retinal + NADPH + H(+). It functions in the pathway cofactor metabolism; retinol metabolism. In terms of biological role, retinol dehydrogenase with a clear preference for NADP. Displays high activity towards 9-cis, 11-cis and all-trans-retinol. Shows a very weak activity towards 13-cis-retinol. Has no activity towards steroid. The chain is Retinol dehydrogenase 14 (RDH14) from Homo sapiens (Human).